The primary structure comprises 493 residues: Mitochondrial distribution and morphology protein 10 (493 aa).

The protein belongs to the MDM10 family. In terms of assembly, component of the ER-mitochondria encounter structure (ERMES) or MDM complex, composed of MMM1, MDM10, MDM12 and MDM34. Associates with the mitochondrial outer membrane sorting assembly machinery SAM(core) complex, which consists of SAM35, SAM37 and SAM50, to form a SAM(holo) complex.

Its subcellular location is the mitochondrion outer membrane. Its function is as follows. Component of the ERMES/MDM complex, which serves as a molecular tether to connect the endoplasmic reticulum and mitochondria. Components of this complex are involved in the control of mitochondrial shape and protein biogenesis and may function in phospholipid exchange. MDM10 is involved in the late assembly steps of the general translocase of the mitochondrial outer membrane (TOM complex). Functions in the TOM40-specific route of the assembly of outer membrane beta-barrel proteins, including the association of TOM40 with the receptor TOM22 and small TOM proteins. Can associate with the SAM(core) complex as well as the MDM12-MMM1 complex, both involved in late steps of the major beta-barrel assembly pathway, that is responsible for biogenesis of all outer membrane beta-barrel proteins. May act as a switch that shuttles between both complexes and channels precursor proteins into the TOM40-specific pathway. Plays a role in mitochondrial morphology and in the inheritance of mitochondria. In Saccharomyces cerevisiae (strain RM11-1a) (Baker's yeast), this protein is Mitochondrial distribution and morphology protein 10.